Here is a 316-residue protein sequence, read N- to C-terminus: Ribosomal RNA small subunit methyltransferase H (316 aa).

Residues 35–37 (GGH), aspartate 55, phenylalanine 79, aspartate 101, and glutamine 108 contribute to the S-adenosyl-L-methionine site.

The protein belongs to the methyltransferase superfamily. RsmH family.

Its subcellular location is the cytoplasm. It catalyses the reaction cytidine(1402) in 16S rRNA + S-adenosyl-L-methionine = N(4)-methylcytidine(1402) in 16S rRNA + S-adenosyl-L-homocysteine + H(+). Specifically methylates the N4 position of cytidine in position 1402 (C1402) of 16S rRNA. The sequence is that of Ribosomal RNA small subunit methyltransferase H from Vibrio proteolyticus (Aeromonas proteolytica).